A 505-amino-acid polypeptide reads, in one-letter code: Deoxyguanosinetriphosphate triphosphohydrolase (505 aa).

An HD domain is found at 66-273; the sequence is RLTHSMEVQQ…MEAADDISYC (208 aa).

Belongs to the dGTPase family. Type 1 subfamily. As to quaternary structure, homotetramer. Mg(2+) serves as cofactor.

It carries out the reaction dGTP + H2O = 2'-deoxyguanosine + triphosphate + H(+). DGTPase preferentially hydrolyzes dGTP over the other canonical NTPs. This chain is Deoxyguanosinetriphosphate triphosphohydrolase, found in Escherichia coli O81 (strain ED1a).